The chain runs to 88 residues: MRLFLSLPVLVVVLAMVLEGPAPTQAAPEISSTLGRIPDKLKEFGNTLEDKARAAIESMKQSDIPAKTRNWFSETFNKVKEQLKTAFS.

The N-terminal stretch at 1-26 is a signal peptide; that stretch reads MRLFLSLPVLVVVLAMVLEGPAPTQA.

Belongs to the apolipoprotein C1 family.

It is found in the secreted. Inhibitor of lipoprotein binding to the low density lipoprotein (LDL) receptor, LDL receptor-related protein, and very low density lipoprotein (VLDL) receptor. Associates with high density lipoproteins (HDL) and the triacylglycerol-rich lipoproteins in the plasma and makes up about 10% of the protein of the VLDL and 2% of that of HDL. Appears to interfere directly with fatty acid uptake and is also the major plasma inhibitor of cholesteryl ester transfer protein (CETP). Binds free fatty acids and reduces their intracellular esterification. Modulates the interaction of APOE with beta-migrating VLDL and inhibits binding of beta-VLDL to the LDL receptor-related protein. The chain is Apolipoprotein C-I (APOC1) from Phoca vitulina (Harbor seal).